Consider the following 334-residue polypeptide: Cathepsin L2 (334 aa).

The signal sequence occupies residues 1–17 (MNLSLVLAAFCLGIASA). Residues 18–113 (VPKFDQNLDT…KVFREPLFLD (96 aa)) constitute a propeptide, activation peptide. Cystine bridges form between Cys-135–Cys-178 and Cys-169–Cys-211. Residue Cys-138 is part of the active site. A glycan (N-linked (GlcNAc...) asparagine) is linked at Asn-221. Cysteines 270 and 323 form a disulfide. Residue His-277 is part of the active site. Residue Asn-292 is glycosylated (N-linked (GlcNAc...) asparagine). Asn-301 is a catalytic residue.

Belongs to the peptidase C1 family. As to expression, predominantly expressed in the thymus and testis. Also expressed in corneal epithelium, and to a lesser extent in conjunctival epithelium and skin.

It is found in the lysosome. It carries out the reaction The recombinant enzyme hydrolyzes proteins (serum albumin, collagen) and synthetic substrates (Z-Phe-Arg-NHMec &gt; Z-Leu-Arg-NHMec &gt; Z-Val-Arg-NHMec).. Its activity is regulated as follows. Inhibited by CST6. Functionally, cysteine protease. May have an important role in corneal physiology. The protein is Cathepsin L2 (CTSV) of Homo sapiens (Human).